The sequence spans 72 residues: Large ribosomal subunit protein uL29 (72 aa).

It belongs to the universal ribosomal protein uL29 family. In terms of assembly, part of the 50S ribosomal subunit.

The polypeptide is Large ribosomal subunit protein uL29 (Pyrococcus furiosus (strain ATCC 43587 / DSM 3638 / JCM 8422 / Vc1)).